Reading from the N-terminus, the 309-residue chain is Sulfur oxygenase/reductase (309 aa).

Cysteine persulfide is present on Cys31. Fe cation is bound by residues His86, His90, and Glu114.

Homoicosatetramer. The resulting structure is a hollow sphere where catalysis takes place in the inside cavity. Fe cation serves as cofactor.

The protein localises to the cytoplasm. It catalyses the reaction 4 sulfur + O2 + 4 H2O = 2 hydrogen sulfide + 2 sulfite + 6 H(+). Inhibited by zinc. Catalyzes the simultaneous oxidation and reduction of elemental sulfur in the presence of oxygen, with sulfite and hydrogen sulfide as products. The polypeptide is Sulfur oxygenase/reductase (sor) (Acidianus ambivalens (Desulfurolobus ambivalens)).